Consider the following 419-residue polypeptide: S-adenosylmethionine synthase (419 aa).

Histidine 15 lines the ATP pocket. Residue aspartate 17 participates in Mg(2+) binding. Glutamate 43 contributes to the K(+) binding site. 2 residues coordinate L-methionine: glutamate 56 and glutamine 100. Positions 100-110 are flexible loop; the sequence is QSPDIAQGVNE. ATP contacts are provided by residues 171-173, 248-249, aspartate 257, 263-264, alanine 280, and lysine 284; these read DGK, KF, and RK. Residue aspartate 257 participates in L-methionine binding. Lysine 288 contributes to the L-methionine binding site.

Belongs to the AdoMet synthase family. Homotetramer; dimer of dimers. Mg(2+) is required as a cofactor. It depends on K(+) as a cofactor.

The protein localises to the cytoplasm. The enzyme catalyses L-methionine + ATP + H2O = S-adenosyl-L-methionine + phosphate + diphosphate. The protein operates within amino-acid biosynthesis; S-adenosyl-L-methionine biosynthesis; S-adenosyl-L-methionine from L-methionine: step 1/1. Its function is as follows. Catalyzes the formation of S-adenosylmethionine (AdoMet) from methionine and ATP. The overall synthetic reaction is composed of two sequential steps, AdoMet formation and the subsequent tripolyphosphate hydrolysis which occurs prior to release of AdoMet from the enzyme. The protein is S-adenosylmethionine synthase of Prochlorococcus marinus (strain MIT 9303).